A 108-amino-acid chain; its full sequence is Long neurotoxin 13 (108 aa).

Residues 1–21 (MKTLLLTLVVVTIVCLDLAYT) form the signal peptide. 5 cysteine pairs are disulfide-bonded: Cys24/Cys42, Cys35/Cys63, Cys48/Cys52, Cys67/Cys78, and Cys79/Cys84.

It belongs to the three-finger toxin family. Long-chain subfamily. Type II alpha-neurotoxin sub-subfamily. Expressed by the venom gland.

It localises to the secreted. Functionally, binds with high affinity to muscular (alpha-1/CHRNA1) and neuronal (alpha-7/CHRNA7) nicotinic acetylcholine receptor (nAChR) and inhibits acetylcholine from binding to the receptor, thereby impairing neuromuscular and neuronal transmission. In Drysdalia coronoides (White-lipped snake), this protein is Long neurotoxin 13.